The primary structure comprises 111 residues: Ig kappa chain V-III region PC 7940 (111 aa).

The segment at 1–23 (DIVLTQSPASLAVSLGQRATISC) is framework-1. Cys-23 and Cys-92 are disulfide-bonded. The complementarity-determining-1 stretch occupies residues 24-38 (RASKSVSAFGYSYMH). A framework-2 region spans residues 39 to 53 (WYQQKPGQPPKLLIY). The complementarity-determining-2 stretch occupies residues 54–60 (LASNLES). A framework-3 region spans residues 61–92 (GVPARFSGSGSGTDFTLNIHPVEEEDAVTYYC). Residues 93-101 (QHSRELPPT) form a complementarity-determining-3 region. Residues 102–111 (FGGGTKLEIK) are framework-4.

The polypeptide is Ig kappa chain V-III region PC 7940 (Mus musculus (Mouse)).